The sequence spans 197 residues: Pyridoxal 5'-phosphate synthase subunit PdxT (197 aa).

Residue 53-55 (GES) coordinates L-glutamine. The Nucleophile role is filled by C85. Residues R114 and 142-143 (IR) each bind L-glutamine. Residues H179 and E181 each act as charge relay system in the active site.

This sequence belongs to the glutaminase PdxT/SNO family. As to quaternary structure, in the presence of PdxS, forms a dodecamer of heterodimers. Only shows activity in the heterodimer.

It carries out the reaction aldehydo-D-ribose 5-phosphate + D-glyceraldehyde 3-phosphate + L-glutamine = pyridoxal 5'-phosphate + L-glutamate + phosphate + 3 H2O + H(+). The catalysed reaction is L-glutamine + H2O = L-glutamate + NH4(+). The protein operates within cofactor biosynthesis; pyridoxal 5'-phosphate biosynthesis. In terms of biological role, catalyzes the hydrolysis of glutamine to glutamate and ammonia as part of the biosynthesis of pyridoxal 5'-phosphate. The resulting ammonia molecule is channeled to the active site of PdxS. The chain is Pyridoxal 5'-phosphate synthase subunit PdxT from Thermococcus onnurineus (strain NA1).